The primary structure comprises 27 residues: KIPNILKGGLKSICKHRKYLDKACAAI.

In terms of assembly, heterodimer composed of subunit A and subunit B (DELTA-PSDTX-Pp1a); disulfide-linked. As to expression, expressed by the venom gland.

The protein localises to the secreted. Its function is as follows. This heterodimer has insecticidal and cytotoxic properties. Induces immediate paralysis when injected into blowflies (Lucilia cuprina), and then death within 24 hours. Also inhibits the growth of Aedes albopictus mosquito C6/36 cells. This chain is DELTA-pseudomyrmecitoxin-Pp1a subunit A, found in Pseudomyrmex penetrator (Ant).